Consider the following 21-residue polypeptide: thr operon leader peptide (21 aa).

Belongs to the thr operon leader peptide family.

In terms of biological role, this protein is involved in control of the biosynthesis of threonine. In Salmonella choleraesuis (strain SC-B67), this protein is thr operon leader peptide.